Reading from the N-terminus, the 505-residue chain is Maturase K (505 aa).

Belongs to the intron maturase 2 family. MatK subfamily.

The protein localises to the plastid. It is found in the chloroplast. Usually encoded in the trnK tRNA gene intron. Probably assists in splicing its own and other chloroplast group II introns. This Gomphrena pulchella (Globe amaranth) protein is Maturase K.